The chain runs to 216 residues: Ceramide-1-phosphate transfer protein (216 aa).

An N-acylsphingoid base 1-phosphate is bound by residues Asp-56, Lys-60, Arg-108, Arg-112, and His-152.

It belongs to the GLTP family.

It localises to the cytoplasm. It is found in the cytosol. Its subcellular location is the golgi apparatus. The protein resides in the trans-Golgi network membrane. The protein localises to the cell membrane. It localises to the endosome membrane. It is found in the nucleus outer membrane. The enzyme catalyses N-(hexadecanoyl)-sphing-4-enine-1-phosphate(in) = N-(hexadecanoyl)-sphing-4-enine-1-phosphate(out). It carries out the reaction N-(9Z-octadecenoyl)-sphing-4-enine-1-phosphate(in) = N-(9Z-octadecenoyl)-sphing-4-enine-1-phosphate(out). Mediates the intracellular transfer of ceramide-1-phosphate (C1P) between organelle membranes and the cell membrane. Required for normal structure of the Golgi stacks. Can bind phosphoceramides with a variety of aliphatic chains, but has a preference for lipids with saturated C16:0 or monounsaturated C18:1 aliphatic chains, and is inefficient with phosphoceramides containing lignoceryl (C24:0). Plays a role in the regulation of the cellular levels of ceramide-1-phosphate, and thereby contributes to the regulation of phospholipase PLA2G4A activity and the release of arachidonic acid. Has no activity with galactosylceramide, lactosylceramide, sphingomyelin, phosphatidylcholine, phosphatidic acid and ceramide. C1P transfer is stimulated by phosphatidylserine in C1P source vesicles. Regulates autophagy, inflammasome mediated IL1B and IL18 processing, and pyroptosis, but not apoptosis. This Mus musculus (Mouse) protein is Ceramide-1-phosphate transfer protein.